Reading from the N-terminus, the 821-residue chain is Ent-pimara-8(14),15-diene synthase (821 aa).

Asp556, Asp560, Asn701, Thr705, and Glu709 together coordinate Mg(2+). The short motif at 556 to 560 is the DDXXD motif element; the sequence is DDFFD.

It belongs to the terpene synthase family. It depends on Mg(2+) as a cofactor. As to expression, highly expressed in roots, at intermediate levels in stems and at lower levels in leaves.

It catalyses the reaction ent-copalyl diphosphate = ent-pimara-8(14),15-diene + diphosphate. The protein operates within secondary metabolite biosynthesis; terpenoid biosynthesis. Functionally, involved in the biosynthesis of ent-kaurene diterpenoids natural products. Catalyzes the conversion of ent-copalyl diphosphate to ent-pimara-8(14),15-diene. The sequence is that of Ent-pimara-8(14),15-diene synthase from Oryza sativa subsp. japonica (Rice).